Consider the following 365-residue polypeptide: G-protein coupled receptor 68 (365 aa).

Residues 1-12 lie on the Extracellular side of the membrane; that stretch reads MGNITADNSSMS. N3 and N8 each carry an N-linked (GlcNAc...) asparagine glycan. The chain crosses the membrane as a helical span at residues 13–49; sequence CTIDHTIHQTLAPVVYVTVLVVGFPANCLSLYFGYLQ. Disulfide bonds link C13/C258 and C94/C172. The Cytoplasmic portion of the chain corresponds to 50-53; the sequence is IKAR. Residues 54–84 traverse the membrane as a helical segment; that stretch reads NELGVYLCNLTVADLFYICSLPFWLQYVLQH. Residues 85–89 lie on the Extracellular side of the membrane; the sequence is DNWSH. A helical membrane pass occupies residues 90 to 125; that stretch reads GDLSCQVCGILLYENIYISVGFLCCISVDRYLAVAH. At 126-133 the chain is on the cytoplasmic side; that stretch reads PFRFHQFR. Residues 134-160 traverse the membrane as a helical segment; sequence TLKAAVGVSVVIWAKELLTSIYFLMHE. Residues 161-176 are Extracellular-facing; that stretch reads EVIEDENQHRVCFEHY. Residues 161–176 form an extracellular loop 2 (ECL2) region; that stretch reads EVIEDENQHRVCFEHY. A helical transmembrane segment spans residues 177 to 214; sequence PIQAWQRAINYYRFLVGFLFPICLLLASYQGILRAVRR. At 215–218 the chain is on the cytoplasmic side; sequence SHGT. A helical membrane pass occupies residues 219–254; the sequence is QKSRKDQIQRLVLSTVVIFLACFLPYHVLLLVRSVW. At 255 to 260 the chain is on the extracellular side; it reads EASCDF. Residues 261-289 traverse the membrane as a helical segment; the sequence is AKGVFNAYHFSLLLTSFNCVADPVLYCFV. Over 290–365 the chain is Cytoplasmic; the sequence is SETTHRDLAR…SGGFPTGRLA (76 aa). The disordered stretch occupies residues 345 to 365; it reads HPAFQTPNSPGSGGFPTGRLA. The segment covering 355 to 365 has biased composition (gly residues); it reads GSGGFPTGRLA.

This sequence belongs to the G-protein coupled receptor 1 family. Found at low level in a wide range of tissues, but significantly expressed in lung, kidney, bone and nervous system.

It is found in the cell membrane. With respect to regulation, activated by a network of residues that connects an extracellular-facing cavity to Glu-149, a conserved charged residue buried in the transmembrane core of the receptor. Protonation likely drives conformational changes in extracellular loop 2 (ECL2), which stabilizes movement of transmembrane 3 (TM3) and a series of rearrangements that connect the extracellular-facing cavity to Glu-149, a residue only conserved in proton-sensing G-protein coupled receptors. Activated in an allosteric manner by divalent metal ions at the extracellular surface following the order: Cd(2+) &gt; Co(2+) &gt; Ni(2+) &gt; Zn(2+) &gt; Fe(2+) &gt; Ca(2+) &gt; Mg(2+). Activated by the benzodiazepine drug lorazepam, a non-selective GPR68 positive allosteric modulator. Activated by ogerin (ZINC67740571), a selective GPR68 positive allosteric modulator. Activated by small molecule MS48107, a selective positive allosteric modulator. Inhibited by small molecule ogremorphin, inducing ferroptosis in cancer cells. Functionally, proton-sensing G-protein coupled receptor activated by extracellular pH, which is required to monitor pH changes and generate adaptive reactions. The receptor is almost silent at pH 7.8 but fully activated at pH 6.8. Ligand binding causes a conformation change that triggers signaling via guanine nucleotide-binding proteins (G proteins) and modulates the activity of downstream effectors, such as phospholipase C. GPR68 is mainly coupled to G(q) G proteins and mediates production of diacylglycerol (DAG) and inositol 1,4,5-trisphosphate (IP3). Acts as a key mechanosensor of fluid shear stress and membrane stretch. Expressed in endothelial cells of small-diameter resistance arteries, where it mediates flow-induced dilation in response to shear stress. May represents an osteoblastic pH sensor regulating cell-mediated responses to acidosis in bone. Acts as a regulator of calcium-sensing receptor CASR in a seesaw manner: GPR68-mediated signaling inhibits CASR signaling in response to protons, while CASR inhibits GPR68 in presence of extracellular calcium. This is G-protein coupled receptor 68 from Homo sapiens (Human).